The chain runs to 338 residues: E3 ubiquitin-protein ligase RING1 (338 aa).

A disordered region spans residues 102–124 (TTTSSSASIDPNNPSLSGPTRSG). Over residues 110 to 121 (IDPNNPSLSGPT) the composition is skewed to polar residues. The segment at 224–265 (CAVCMDDFEEGTEAKQMPCKHLYHKDCLLPWLELHNSCPVCR) adopts an RING-type; atypical zinc-finger fold. Basic and acidic residues-rich tracts occupy residues 267-279 (ELPT…ERRV) and 298-309 (SDGDNRTVERSF). The tract at residues 267–338 (ELPTDDPDYE…NAETRQEDLD (72 aa)) is disordered.

Auto-ubiquitinated as part of the enzymatic reaction. As to expression, mostly expressed in cotton fibers, and, to a lower extent, in leaves and flowers.

It carries out the reaction S-ubiquitinyl-[E2 ubiquitin-conjugating enzyme]-L-cysteine + [acceptor protein]-L-lysine = [E2 ubiquitin-conjugating enzyme]-L-cysteine + N(6)-ubiquitinyl-[acceptor protein]-L-lysine.. It participates in protein modification; protein ubiquitination. Functionally, E3 ubiquitin-protein ligase which accepts ubiquitin from an E2 ubiquitin-conjugating enzyme in the form of a thioester and then directly transfers the ubiquitin to targeted substrates. Promotes polyubiquitination of target proteins. The polypeptide is E3 ubiquitin-protein ligase RING1 (RING1) (Gossypium hirsutum (Upland cotton)).